A 199-amino-acid chain; its full sequence is MDFKIEYTWDSFPVSHEPVRIRLNPCDKGLKMEVSAPFFNDPPAPLGEPGKPFSELWNYEVVEAFFLNNTTEQYLEVELCPHGQHLVLLLSGRRNVWKKELALSFKVSRGETHWEGEAFLPWSYFPSKVTRFNSFAIHGSNDKRVYEALYPVPQPELQQGQNPDFHRLEYFKPFSFNTLLGEEWKQPESDLWLIEKSDI.

Belongs to the UPF0462 family.

The protein is UPF0462 protein C4orf33 homolog of Rattus norvegicus (Rat).